Here is a 535-residue protein sequence, read N- to C-terminus: Transmembrane protein 151 homolog (535 aa).

3 helical membrane passes run 27–47, 73–93, and 254–274; these read GYGK…YATY, YNFV…MECW, and PWFL…SWPL. Positions 498–535 are disordered; the sequence is ASISHSSSKDLKSLTLKNNNGAANNNNNNNNENPEEQP. The span at 510 to 529 shows a compositional bias: low complexity; sequence SLTLKNNNGAANNNNNNNNE.

This sequence belongs to the TMEM151 family.

The protein resides in the membrane. The sequence is that of Transmembrane protein 151 homolog from Caenorhabditis briggsae.